A 489-amino-acid chain; its full sequence is Rhamnulokinase (489 aa).

13–17 provides a ligand contact to ATP; the sequence is ASSGR. Cys-68 and Cys-222 are disulfide-bonded. Substrate is bound by residues Gly-83 and 236-238; that span reads HDT. Residue Asp-237 is the Proton acceptor of the active site. Thr-259 contributes to the ATP binding site. Asn-296 provides a ligand contact to substrate. Gln-304 lines the ATP pocket. Cys-353 and Cys-370 form a disulfide bridge. Gly-402 provides a ligand contact to ATP. A disulfide bridge links Cys-413 with Cys-417.

It belongs to the rhamnulokinase family. Requires Mg(2+) as cofactor.

It catalyses the reaction L-rhamnulose + ATP = L-rhamnulose 1-phosphate + ADP + H(+). It functions in the pathway carbohydrate degradation; L-rhamnose degradation; glycerone phosphate from L-rhamnose: step 2/3. In terms of biological role, involved in the catabolism of L-rhamnose (6-deoxy-L-mannose). Catalyzes the transfer of the gamma-phosphate group from ATP to the 1-hydroxyl group of L-rhamnulose to yield L-rhamnulose 1-phosphate. The sequence is that of Rhamnulokinase from Salmonella schwarzengrund (strain CVM19633).